The chain runs to 418 residues: Phosphoglycerate kinase (418 aa).

Substrate contacts are provided by residues 18-20 (DFN), Arg-34, 57-60 (HLGR), Arg-115, and Arg-171. ATP-binding positions include Lys-224, Gly-315, Glu-346, and 375 to 378 (GGDS).

This sequence belongs to the phosphoglycerate kinase family. Monomer.

The protein localises to the cytoplasm. The catalysed reaction is (2R)-3-phosphoglycerate + ATP = (2R)-3-phospho-glyceroyl phosphate + ADP. The protein operates within carbohydrate degradation; glycolysis; pyruvate from D-glyceraldehyde 3-phosphate: step 2/5. The chain is Phosphoglycerate kinase from Porphyromonas gingivalis (strain ATCC BAA-308 / W83).